Consider the following 103-residue polypeptide: Large ribosomal subunit protein bL21 (103 aa).

It belongs to the bacterial ribosomal protein bL21 family. Part of the 50S ribosomal subunit. Contacts protein L20.

In terms of biological role, this protein binds to 23S rRNA in the presence of protein L20. The sequence is that of Large ribosomal subunit protein bL21 from Shewanella sp. (strain ANA-3).